Consider the following 365-residue polypeptide: Peptide chain release factor 2 (365 aa).

Gln-252 carries the N5-methylglutamine modification.

It belongs to the prokaryotic/mitochondrial release factor family. Methylated by PrmC. Methylation increases the termination efficiency of RF2.

The protein localises to the cytoplasm. In terms of biological role, peptide chain release factor 2 directs the termination of translation in response to the peptide chain termination codons UGA and UAA. The chain is Peptide chain release factor 2 from Pseudoalteromonas translucida (strain TAC 125).